Consider the following 433-residue polypeptide: Type I acyl-CoA thioesterase mpaH (433 aa).

Positions 58–246 are abhydrolase domain; the sequence is HGVGLPKELY…VKARFDAAAD (189 aa). A substrate-binding site is contributed by Val-60. Residue Ser-139 is the Nucleophile of the active site. Phe-140 contributes to the substrate binding site. Active-site residues include Asp-163 and His-365.

It belongs to the AB hydrolase superfamily. MpaH hydrolase family. In terms of assembly, homodimer.

It localises to the peroxisome matrix. The enzyme catalyses mycophenolyl-CoA + H2O = mycophenolate + CoA + H(+). It functions in the pathway secondary metabolite biosynthesis; terpenoid biosynthesis. Functionally, type I acyl-CoA thioesterase; part of the gene cluster that mediates the biosynthesis of mycophenolic acid (MPA), the first isolated antibiotic natural product in the world obtained from a culture of Penicillium brevicompactum in 1893. MpaH acts as a peroxisomal acyl-CoA hydrolase that converts MPA-CoA into the final product MPA. The first step of the pathway is the synthesis of 5-methylorsellinic acid (5MOA) by the cytosolic polyketide synthase mpaC. 5MOA is then converted to the phthalide compound 5,7-dihydroxy-4,6-dimethylphthalide (DHMP) by the endoplasmic reticulum-bound cytochrome P450 monooxygenase mpaDE. MpaDE first catalyzes hydroxylation of 5-MOA to 4,6-dihydroxy-2-(hydroxymethyl)-3-methylbenzoic acid (DHMB). MpaDE then acts as a lactone synthase that catalyzes the ring closure to convert DHMB into DHMP. The next step is the prenylation of DHMP by the Golgi apparatus-associated prenyltransferase mpaA to yield farnesyl-DHMP (FDHMP). The ER-bound oxygenase mpaB then mediates the oxidative cleavage the C19-C20 double bond in FDHMP to yield FDHMP-3C via a mycophenolic aldehyde intermediate. The O-methyltransferase mpaG catalyzes the methylation of FDHMP-3C to yield MFDHMP-3C. After the cytosolic methylation of FDHMP-3C, MFDHMP-3C enters into peroxisomes probably via free diffusion due to its low molecular weight. Upon a peroxisomal CoA ligation reaction, catalyzed by a beta-oxidation component enzyme acyl-CoA ligase ACL891, MFDHMP-3C-CoA would then be restricted to peroxisomes for the following beta-oxidation pathway steps. The peroxisomal beta-oxidation machinery than converts MFDHMP-3C-CoA into MPA_CoA, via a beta-oxidation chain-shortening process. Finally mpaH acts as a peroxisomal acyl-CoA hydrolase with high substrate specificity toward MPA-CoA to release the final product MPA. The polypeptide is Type I acyl-CoA thioesterase mpaH (Penicillium roqueforti (strain FM164)).